A 305-amino-acid chain; its full sequence is Putative F-box protein PP2-B8 (305 aa).

Positions 33–79 constitute an F-box domain; it reads VAELDDLPEECVSIIVSFTSPQDACVLASVSKTFASAVKSDIVWEKF.

The chain is Putative F-box protein PP2-B8 (PP2B8) from Arabidopsis thaliana (Mouse-ear cress).